The primary structure comprises 138 residues: Putative pre-16S rRNA nuclease (138 aa).

This sequence belongs to the YqgF nuclease family.

Its subcellular location is the cytoplasm. Could be a nuclease involved in processing of the 5'-end of pre-16S rRNA. In Clostridium tetani (strain Massachusetts / E88), this protein is Putative pre-16S rRNA nuclease.